A 162-amino-acid polypeptide reads, in one-letter code: Lipoprotein signal peptidase (162 aa).

Transmembrane regions (helical) follow at residues 12-32 (WFAL…YFNS), 42-62 (VVEG…FSFL), 66-86 (GGWQ…WLGW), and 93-113 (FSGL…GNVI). Active-site residues include D123 and D142. A helical transmembrane segment spans residues 133 to 153 (WYYPAFNLADSFICVGAALMV).

This sequence belongs to the peptidase A8 family.

Its subcellular location is the cell inner membrane. It carries out the reaction Release of signal peptides from bacterial membrane prolipoproteins. Hydrolyzes -Xaa-Yaa-Zaa-|-(S,diacylglyceryl)Cys-, in which Xaa is hydrophobic (preferably Leu), and Yaa (Ala or Ser) and Zaa (Gly or Ala) have small, neutral side chains.. The protein operates within protein modification; lipoprotein biosynthesis (signal peptide cleavage). Functionally, this protein specifically catalyzes the removal of signal peptides from prolipoproteins. This Chromobacterium violaceum (strain ATCC 12472 / DSM 30191 / JCM 1249 / CCUG 213 / NBRC 12614 / NCIMB 9131 / NCTC 9757 / MK) protein is Lipoprotein signal peptidase.